The chain runs to 173 residues: Large ribosomal RNA subunit accumulation protein YceD (173 aa).

It belongs to the DUF177 domain family.

Its function is as follows. Plays a role in synthesis, processing and/or stability of 23S rRNA. This is Large ribosomal RNA subunit accumulation protein YceD (yceD) from Escherichia coli O157:H7.